The primary structure comprises 238 residues: Transcriptional repressor ThaA (238 aa).

The region spanning 169–234 (IPGEIARVSL…HAAVKATLVG (66 aa)) is the HTH luxR-type domain. The H-T-H motif DNA-binding region spans 193 to 212 (VSEISSILQMSVRNINFHIQ).

The protein belongs to the autoinducer-regulated transcriptional regulatory protein family.

In terms of biological role, represses thailandamide production. This is Transcriptional repressor ThaA from Burkholderia thailandensis (strain ATCC 700388 / DSM 13276 / CCUG 48851 / CIP 106301 / E264).